The sequence spans 161 residues: Nucleotide-binding protein PFLU_4927 (161 aa).

The protein belongs to the YajQ family.

Functionally, nucleotide-binding protein. In Pseudomonas fluorescens (strain SBW25), this protein is Nucleotide-binding protein PFLU_4927.